Here is a 342-residue protein sequence, read N- to C-terminus: Ribosomal RNA small subunit methyltransferase C (342 aa).

Belongs to the methyltransferase superfamily. RsmC family. In terms of assembly, monomer.

The protein localises to the cytoplasm. It carries out the reaction guanosine(1207) in 16S rRNA + S-adenosyl-L-methionine = N(2)-methylguanosine(1207) in 16S rRNA + S-adenosyl-L-homocysteine + H(+). Its function is as follows. Specifically methylates the guanine in position 1207 of 16S rRNA in the 30S particle. This Salmonella arizonae (strain ATCC BAA-731 / CDC346-86 / RSK2980) protein is Ribosomal RNA small subunit methyltransferase C.